The sequence spans 406 residues: Inactive serine protease 35 (406 aa).

An N-terminal signal peptide occupies residues 1–17 (MLLWLIIFVSGWTLSLG). N-linked (GlcNAc...) asparagine glycosylation occurs at Asn-87. Residues 121-401 (VYGTDSRFSI…ICLWIHGNAA (281 aa)) enclose the Peptidase S1 domain. Cys-151 and Cys-167 are oxidised to a cystine. The span at 186 to 204 (LKMRNKGGRKKRRGSRRSR) shows a compositional bias: basic residues. The interval 186–248 (LKMRNKGGRK…RPSFQWTRVK (63 aa)) is disordered.

Belongs to the peptidase S1 family.

It is found in the secreted. This chain is Inactive serine protease 35 (Prss35), found in Rattus norvegicus (Rat).